Here is a 301-residue protein sequence, read N- to C-terminus: MGKQFDKKITWTIKNFASLLSDLIYSDHFVVGGCKWHLRAYPKGYNNANSLSLFLGVAVPTSLPSGWRRHTKFRLTLVNQLSDKLSQSKLNELEQWFDEKTTNWGLSSMCPLNEIHAKDSGFLLNGELKIVVEIKVLETIGKLDVTEETSTITETVDVNGFQLLPSQAKSVSRMFAKHPELASDLRPKNPNLRTGYMSLLLSLIETLSQLPQQMSKDDLLDAYDALGSMRDAGFKLDWLEKKLYEVSEKKENEEASETGLQEMEEELKDMKQKCLEMEALVEKEKAKVSTAKAPISFDDIV.

One can recognise an MATH domain in the interval 6 to 134; it reads DKKITWTIKN…NGELKIVVEI (129 aa). Residues 235 to 289 are a coiled coil; that stretch reads KLDWLEKKLYEVSEKKENEEASETGLQEMEEELKDMKQKCLEMEALVEKEKAKVS.

Self-interacts. Interacts with RTM1.

Required for the restriction of long-distance movement of the pathogenic tobacco etch virus (TEV) without causing a hypersensitive response or inducing systemic acquired resistance. The protein is Protein RESTRICTED TEV MOVEMENT 3 (RTM3) of Arabidopsis thaliana (Mouse-ear cress).